The primary structure comprises 115 residues: Aspartate 1-decarboxylase (115 aa).

S25 functions as the Schiff-base intermediate with substrate; via pyruvic acid in the catalytic mechanism. The residue at position 25 (S25) is a Pyruvic acid (Ser). T57 serves as a coordination point for substrate. Residue Y58 is the Proton donor of the active site. Position 72–74 (72–74) interacts with substrate; that stretch reads GAA.

The protein belongs to the PanD family. As to quaternary structure, heterooctamer of four alpha and four beta subunits. Requires pyruvate as cofactor. In terms of processing, is synthesized initially as an inactive proenzyme, which is activated by self-cleavage at a specific serine bond to produce a beta-subunit with a hydroxyl group at its C-terminus and an alpha-subunit with a pyruvoyl group at its N-terminus.

It is found in the cytoplasm. The catalysed reaction is L-aspartate + H(+) = beta-alanine + CO2. The protein operates within cofactor biosynthesis; (R)-pantothenate biosynthesis; beta-alanine from L-aspartate: step 1/1. In terms of biological role, catalyzes the pyruvoyl-dependent decarboxylation of aspartate to produce beta-alanine. The sequence is that of Aspartate 1-decarboxylase from Campylobacter fetus subsp. fetus (strain 82-40).